We begin with the raw amino-acid sequence, 235 residues long: Enolase-phosphatase E1 (235 aa).

Residues D10 and E12 each coordinate Mg(2+). Substrate contacts are provided by residues 130–131 and K169; that span reads SS. A Mg(2+)-binding site is contributed by D194.

It belongs to the HAD-like hydrolase superfamily. MasA/MtnC family. As to quaternary structure, monomer. It depends on Mg(2+) as a cofactor.

The protein localises to the cytoplasm. It localises to the nucleus. It carries out the reaction 5-methylsulfanyl-2,3-dioxopentyl phosphate + H2O = 1,2-dihydroxy-5-(methylsulfanyl)pent-1-en-3-one + phosphate. Its pathway is amino-acid biosynthesis; L-methionine biosynthesis via salvage pathway; L-methionine from S-methyl-5-thio-alpha-D-ribose 1-phosphate: step 3/6. It functions in the pathway amino-acid biosynthesis; L-methionine biosynthesis via salvage pathway; L-methionine from S-methyl-5-thio-alpha-D-ribose 1-phosphate: step 4/6. Functionally, bifunctional enzyme that catalyzes the enolization of 2,3-diketo-5-methylthiopentyl-1-phosphate (DK-MTP-1-P) into the intermediate 2-hydroxy-3-keto-5-methylthiopentenyl-1-phosphate (HK-MTPenyl-1-P), which is then dephosphorylated to form the acireductone 1,2-dihydroxy-3-keto-5-methylthiopentene (DHK-MTPene). The sequence is that of Enolase-phosphatase E1 from Komagataella phaffii (strain GS115 / ATCC 20864) (Yeast).